Reading from the N-terminus, the 399-residue chain is Serine palmitoyltransferase (399 aa).

Pyridoxal 5'-phosphate is bound by residues 113-114 (GF), His213, Thr241, and Ser243. Lys244 carries the N6-(pyridoxal phosphate)lysine modification.

Belongs to the class-II pyridoxal-phosphate-dependent aminotransferase family. In terms of assembly, homodimer. The cofactor is pyridoxal 5'-phosphate.

Its subcellular location is the cytoplasm. It carries out the reaction L-serine + hexadecanoyl-CoA + H(+) = 3-oxosphinganine + CO2 + CoA. It participates in lipid metabolism; sphingolipid metabolism. Functionally, catalyzes the condensation of L-serine with palmitoyl-CoA (hexadecanoyl-CoA) to produce 3-oxosphinganine. This chain is Serine palmitoyltransferase, found in Sphingobacterium spiritivorum (Flavobacterium spiritivorum).